The chain runs to 85 residues: Acyl carrier protein ScoB (85 aa).

In terms of domain architecture, Carrier spans 1–77 (MPAPLTLDGF…QWWQLLSARQ (77 aa)). An O-(pantetheine 4'-phosphoryl)serine modification is found at Ser38.

Belongs to the acyl carrier protein (ACP) family. It depends on pantetheine 4'-phosphate as a cofactor.

It participates in lipid metabolism; fatty acid metabolism. Its function is as follows. Acyl-carrier protein (ACP) involved in the biosynthesis of a unique class of isonitrile lipopeptides (INLPs). Is the dedicated ACP for the loading of activated acyl groups catalyzed by ScoC. The chain is Acyl carrier protein ScoB from Streptomyces coeruleorubidus.